The sequence spans 506 residues: Probable Xaa-Pro aminopeptidase BDBG_08406 (506 aa).

Asp-285, Asp-296, Glu-433, and Glu-471 together coordinate Mn(2+).

It belongs to the peptidase M24B family. Mn(2+) serves as cofactor.

It carries out the reaction Release of any N-terminal amino acid, including proline, that is linked to proline, even from a dipeptide or tripeptide.. In terms of biological role, catalyzes the removal of a penultimate prolyl residue from the N-termini of peptides. In Blastomyces gilchristii (strain SLH14081) (Blastomyces dermatitidis), this protein is Probable Xaa-Pro aminopeptidase BDBG_08406.